A 361-amino-acid polypeptide reads, in one-letter code: Mitochondrial import receptor subunit TOM40 homolog (361 aa).

Residues 1–73 form a disordered region; it reads MGNVLAASSP…GAAAASEDGS (73 aa). Residues 11-36 are compositionally biased toward pro residues; that stretch reads PAGPPPPPTPSLVGLPPPPPSPPGFT. Gly residues predominate over residues 40-50; the sequence is LGGGLGTGSST. Residues 51 to 69 show a composition bias toward low complexity; it reads GRGSERTPGAAASGAAAAS.

This sequence belongs to the Tom40 family. Forms part of the preprotein translocase complex of the outer mitochondrial membrane (TOM complex) which consists of at least 7 different proteins (TOMM5, TOMM6, TOMM7, TOMM20, TOMM22, TOMM40 and TOMM70). Interacts with mitochondrial targeting sequences. Interacts with TIMM29; linking the TIM22 complex to the TOM complex. Forms a complex with BCAP31 (via C-terminus) which mediates the translocation of components of the mitochondrial membrane respiratory chain NADH dehydrogenase (Complex I) from the cytosol to the mitochondria. Interacts (via N-terminus) with CYP1A1 (via mitochondrial targeting signal); this interaction is required for CYP1A1 translocation across the mitochondrial outer membrane.

It localises to the mitochondrion outer membrane. Channel-forming protein essential for import of protein precursors into mitochondria. Plays a role in the assembly of the mitochondrial membrane respiratory chain NADH dehydrogenase (Complex I) by forming a complex with BCAP31 and mediating the translocation of Complex I components from the cytosol to the mitochondria. In Mus musculus (Mouse), this protein is Mitochondrial import receptor subunit TOM40 homolog (Tomm40).